Consider the following 279-residue polypeptide: Biotin synthase (279 aa).

Positions 1 to 228 (MKDIFLCSIC…SARLMIAGGR (228 aa)) constitute a Radical SAM core domain. C17, C21, and C24 together coordinate [4Fe-4S] cluster. 4 residues coordinate [2Fe-2S] cluster: C61, C96, C154, and R221.

It belongs to the radical SAM superfamily. Biotin synthase family. Homodimer. It depends on [4Fe-4S] cluster as a cofactor. The cofactor is [2Fe-2S] cluster.

The catalysed reaction is (4R,5S)-dethiobiotin + (sulfur carrier)-SH + 2 reduced [2Fe-2S]-[ferredoxin] + 2 S-adenosyl-L-methionine = (sulfur carrier)-H + biotin + 2 5'-deoxyadenosine + 2 L-methionine + 2 oxidized [2Fe-2S]-[ferredoxin]. Its pathway is cofactor biosynthesis; biotin biosynthesis; biotin from 7,8-diaminononanoate: step 2/2. In terms of biological role, catalyzes the conversion of dethiobiotin (DTB) to biotin by the insertion of a sulfur atom into dethiobiotin via a radical-based mechanism. The polypeptide is Biotin synthase (Wolinella succinogenes (strain ATCC 29543 / DSM 1740 / CCUG 13145 / JCM 31913 / LMG 7466 / NCTC 11488 / FDC 602W) (Vibrio succinogenes)).